A 64-amino-acid chain; its full sequence is uncharacterized protein (64 aa).

The interval 35-64 (TIRKPPIEHAAGPLGSTSRAGHRSYGGVAS) is disordered.

This is an uncharacterized protein from Mycobacterium tuberculosis (strain ATCC 25618 / H37Rv).